Consider the following 295-residue polypeptide: Alpha-soluble NSF attachment protein (295 aa).

Met-1 bears the N-acetylmethionine mark. Ser-26, Ser-29, and Ser-195 each carry phosphoserine.

Belongs to the SNAP family. As to quaternary structure, interacts with PRKCABP, and disrupts the interaction between GRIA2 and PRKCABP, leading to the internalization of GRIA2. Found in a complex with VAMP8. Component of a SNARE-like complex that contains at least ZW10, USE1L, RINT1, STX18 and NAPA/SNAP-alpha. Interacts with VTI1A. Interacts with STX12. Interacts with GNA12 (via N-terminus); the interaction promotes CDH5 localization to plasma membrane.

It localises to the cell membrane. In terms of biological role, required for vesicular transport between the endoplasmic reticulum and the Golgi apparatus. Together with GNA12 promotes CDH5 localization to plasma membrane. This is Alpha-soluble NSF attachment protein (NAPA) from Homo sapiens (Human).